Reading from the N-terminus, the 1001-residue chain is Copper-transporting ATPase RAN1 (1001 aa).

The interval 1 to 21 is disordered; sequence MAPSRRDLQLTPVTGGSSSQI. Over 1-298 the chain is Cytoplasmic; it reads MAPSRRDLQL…TGEASNMFRR (298 aa). Residues 11-21 show a composition bias toward polar residues; the sequence is TPVTGGSSSQI. HMA domains lie at 56–122 and 133–199; these read RKIQ…FEAE and LVGQ…FEGS. Cu(+)-binding residues include Cys-67, Cys-70, Cys-144, and Cys-147. An HMA 3; degenerate domain is found at 207 to 273; sequence DKLVLRVDGI…GIEEDGFGKF (67 aa). Residues 299 to 320 traverse the membrane as a helical segment; that stretch reads FISSLVLSIPLFFIQVICPHIA. The Extracellular portion of the chain corresponds to 321-338; sequence LFDALLVWRCGPFMMGDW. A helical transmembrane segment spans residues 339 to 358; it reads LKWALVSVIQFVIGKRFYVA. The Cytoplasmic segment spans residues 359–365; sequence AWRALRN. A helical transmembrane segment spans residues 366 to 386; that stretch reads GSTNMDVLVALGTSASYFYSV. Topologically, residues 387 to 403 are extracellular; it reads GALLYGAVTGFWSPTYF. A helical transmembrane segment spans residues 404–424; it reads DASAMLITFVLLGKYLESLAK. Residues 425 to 558 are Cytoplasmic-facing; it reads GKTSDAMKKL…KAPIQKFADY (134 aa). Residues 559–581 form a helical membrane-spanning segment; that stretch reads VASIFVPVVITLALFTLVGWSIG. Over 582 to 602 the chain is Extracellular; sequence GAVGAYPDEWLPENGTHFVFS. The helical transmembrane segment at 603–620 threads the bilayer; it reads LMFSISVVVIACPCALGL. The Cytoplasmic portion of the chain corresponds to 621 to 931; sequence ATPTAVMVAT…DLSRKTLTRI (311 aa). The active-site 4-aspartylphosphate intermediate is Asp-658. The Mg(2+) site is built by Asp-877 and Asp-881. The helical transmembrane segment at 932 to 951 threads the bilayer; sequence RLNYVFAMAYNVVSIPIAAG. Over 952 to 963 the chain is Extracellular; the sequence is VFFPVLRVQLPP. The helical transmembrane segment at 964 to 982 threads the bilayer; the sequence is WAAGACMALSSVSVVCSSL. Residues 983-1001 lie on the Cytoplasmic side of the membrane; sequence LLRRYKKPRLTTVLKITTE.

The protein belongs to the cation transport ATPase (P-type) (TC 3.A.3) family. Type IB subfamily.

The protein resides in the membrane. It catalyses the reaction Cu(+)(in) + ATP + H2O = Cu(+)(out) + ADP + phosphate + H(+). Involved in copper import into the cell. Essential for ethylene signaling, which requires copper. Acts by delivering copper to create functional hormone receptors. This is Copper-transporting ATPase RAN1 (RAN1) from Arabidopsis thaliana (Mouse-ear cress).